Reading from the N-terminus, the 131-residue chain is Small ribosomal subunit protein bS6 (131 aa).

A disordered region spans residues 98-131 (EASPMVKAKDERRERRDDFANETADDSDAGDSEE). The segment covering 104–116 (KAKDERRERRDDF) has biased composition (basic and acidic residues). The segment covering 120 to 131 (TADDSDAGDSEE) has biased composition (acidic residues).

This sequence belongs to the bacterial ribosomal protein bS6 family.

Binds together with bS18 to 16S ribosomal RNA. This chain is Small ribosomal subunit protein bS6, found in Enterobacter sp. (strain 638).